We begin with the raw amino-acid sequence, 195 residues long: Inosine triphosphate pyrophosphatase (195 aa).

Thr-13–Lys-18 is a binding site for ITP. Mg(2+) is bound at residue Glu-43. Residues Lys-55, Asp-71–Thr-72, Lys-88, Phe-148–Asp-151, Lys-171, and His-176–Arg-177 contribute to the ITP site.

The protein belongs to the HAM1 NTPase family. As to quaternary structure, homodimer. It depends on Mg(2+) as a cofactor. The cofactor is Mn(2+).

The protein resides in the cytoplasm. The enzyme catalyses ITP + H2O = IMP + diphosphate + H(+). It catalyses the reaction dITP + H2O = dIMP + diphosphate + H(+). It carries out the reaction XTP + H2O = XMP + diphosphate + H(+). The catalysed reaction is N(6)-hydroxy-dATP + H2O = N(6)-hydroxy-dAMP + diphosphate + H(+). In terms of biological role, pyrophosphatase that hydrolyzes the non-canonical purine nucleotides inosine triphosphate (ITP), deoxyinosine triphosphate (dITP) as well as 2'-deoxy-N-6-hydroxylaminopurine triphosphate (dHAPTP) and xanthosine 5'-triphosphate (XTP) to their respective monophosphate derivatives. The enzyme does not distinguish between the deoxy- and ribose forms. Probably excludes non-canonical purines from RNA and DNA precursor pools, thus preventing their incorporation into RNA and DNA and avoiding chromosomal lesions. The sequence is that of Inosine triphosphate pyrophosphatase (itpa) from Xenopus laevis (African clawed frog).